Reading from the N-terminus, the 710-residue chain is MFDIHTVEIEWAGRPLKLETGKIARQADGAVMATYGETVVLATVVSAKSPKPGQDFFPLTVNYQEKTYAAGKIPGGYFKREGRPSEKETLVSRLIDRPIRPLFPEGYKNDTQVVVTVIQHDLENDPDILSMVATSAALTLSGVPFMGPIGGARVGYINGEYVLNPHLDEMDESSLDLVVAGTQEAVLMVESEAKELSEDVMLGAVMFGHRGFQPVIDAIIKLAEVAAKEPRDFQPEDHSALEAEMLSIAEGELRTAYKNTQKAERYAAVDAVKAKVKAHFFPEGVEPKYSAEVIGAVFKHLQAKIVRWNILDTKSRIDGRDLSTVRAIVSEVGVLPRTHGSSLFTRGETQAIVVATLGTGEDEQYVDSLTGMYKERFLLHYNFPPYSVGETGRMGSPGRREIGHGKLAWRAVRPMLPTAEQFPYTLRVVSEITESNGSSSMATVCGTSLALMDAGVPLAKPVAGIAMGLIKEDERFAVLSDILGDEDHLGDMDFKVAGTDGGITALQMDIKIEGITEEIMNVALNQAKGGRLHILGEMAKAISESRGQLGEFAPRIEVMNIPVDKIREVIGSGGKVIREIVEKTGAKINIEDDGTVKIASSSGKEIEAARKWIHSIVAEPEVGQIYEGTVVKTADFGAFVNFFGARDGLVHISQLASERVAKTQDVVKEGDKVWVKLLGFDERGKVRLSMKVVDQATGQELAAKKDDAAE.

2 residues coordinate Mg(2+): Asp-487 and Asp-493. The 60-residue stretch at 554 to 613 (PRIEVMNIPVDKIREVIGSGGKVIREIVEKTGAKINIEDDGTVKIASSSGKEIEAARKWI) folds into the KH domain. The 69-residue stretch at 623–691 (GQIYEGTVVK…ERGKVRLSMK (69 aa)) folds into the S1 motif domain.

It belongs to the polyribonucleotide nucleotidyltransferase family. The cofactor is Mg(2+).

It is found in the cytoplasm. It carries out the reaction RNA(n+1) + phosphate = RNA(n) + a ribonucleoside 5'-diphosphate. In terms of biological role, involved in mRNA degradation. Catalyzes the phosphorolysis of single-stranded polyribonucleotides processively in the 3'- to 5'-direction. The polypeptide is Polyribonucleotide nucleotidyltransferase (Rhizobium rhizogenes (strain K84 / ATCC BAA-868) (Agrobacterium radiobacter)).